Here is a 416-residue protein sequence, read N- to C-terminus: Histidinol dehydrogenase (416 aa).

Residues tyrosine 117, glutamine 178, and asparagine 201 each contribute to the NAD(+) site. Positions 224, 246, and 249 each coordinate substrate. Zn(2+) is bound by residues glutamine 246 and histidine 249. Active-site proton acceptor residues include glutamate 314 and histidine 315. Substrate is bound by residues histidine 315, aspartate 348, glutamate 402, and histidine 407. A Zn(2+)-binding site is contributed by aspartate 348. Histidine 407 is a Zn(2+) binding site.

It belongs to the histidinol dehydrogenase family. The cofactor is Zn(2+).

The catalysed reaction is L-histidinol + 2 NAD(+) + H2O = L-histidine + 2 NADH + 3 H(+). It participates in amino-acid biosynthesis; L-histidine biosynthesis; L-histidine from 5-phospho-alpha-D-ribose 1-diphosphate: step 9/9. Functionally, catalyzes the sequential NAD-dependent oxidations of L-histidinol to L-histidinaldehyde and then to L-histidine. This Staphylococcus aureus (strain bovine RF122 / ET3-1) protein is Histidinol dehydrogenase.